The chain runs to 437 residues: Branched-chain amino acid transport system 2 carrier protein (437 aa).

12 helical membrane passes run 9–29 (LLAL…IIFP), 43–63 (AAFG…VALA), 80–100 (AGVA…ATPR), 117–137 (GGVP…FLVL), 149–169 (VITP…IFAP), 192–212 (GYLT…ATAI), 228–248 (MIAG…LFYL), 280–300 (LLLA…LITA), 308–328 (LLPV…LLVA), 335–355 (LISL…VLIA), 369–389 (VFVP…LGAA), and 404–424 (LADQ…LAVV).

It belongs to the branched chain amino acid transporter family.

The protein localises to the cell inner membrane. Functionally, component of the LIV-II transport system for branched-chain amino acids. BraB is specific for isoleucine, leucine and valine. The LIV-II transport system is coupled to sodium and lithium ions. The sequence is that of Branched-chain amino acid transport system 2 carrier protein (braB) from Pseudomonas aeruginosa (strain ATCC 15692 / DSM 22644 / CIP 104116 / JCM 14847 / LMG 12228 / 1C / PRS 101 / PAO1).